A 282-amino-acid polypeptide reads, in one-letter code: Probable endonuclease LCL3 (282 aa).

A helical transmembrane segment spans residues 55-71; that stretch reads SNLIPTVLLTSGILFAV. In terms of domain architecture, TNase-like spans 95–256; the sequence is RSILGKVTSV…KKKGKGLWKA (162 aa). The active site involves arginine 144. A Ca(2+)-binding site is contributed by aspartate 149. Catalysis depends on residues glutamate 152 and arginine 192.

It belongs to the LCL3 family.

The protein localises to the mitochondrion. It is found in the membrane. The polypeptide is Probable endonuclease LCL3 (LCL3) (Arthroderma otae (strain ATCC MYA-4605 / CBS 113480) (Microsporum canis)).